The sequence spans 385 residues: Pepsin A (385 aa).

Positions 1–15 (MKWLLLLSLVVLSEC) are cleaved as a signal peptide. A propeptide spans 16–59 (LVKVPLVRKKSLRQNLIKNGKLKDFLKTHKHNPASKYFPEAAAL) (activation peptide). The 310-residue stretch at 73 to 382 (YFGTIGIGTP…DRANNKVGLA (310 aa)) folds into the Peptidase A1 domain. Aspartate 91 is an active-site residue. Cysteine 104 and cysteine 109 are oxidised to a cystine. The residue at position 127 (serine 127) is a Phosphoserine. A disulfide bond links cysteine 265 and cysteine 269. Aspartate 274 is a catalytic residue. Cysteine 308 and cysteine 341 are disulfide-bonded.

This sequence belongs to the peptidase A1 family. Minor amounts of the active enzyme occur with 'Ala-58' at the amino end.

The protein resides in the secreted. The enzyme catalyses Preferential cleavage: hydrophobic, preferably aromatic, residues in P1 and P1' positions. Cleaves 1-Phe-|-Val-2, 4-Gln-|-His-5, 13-Glu-|-Ala-14, 14-Ala-|-Leu-15, 15-Leu-|-Tyr-16, 16-Tyr-|-Leu-17, 23-Gly-|-Phe-24, 24-Phe-|-Phe-25 and 25-Phe-|-Tyr-26 bonds in the B chain of insulin.. Shows particularly broad specificity; although bonds involving phenylalanine and leucine are preferred, many others are also cleaved to some extent. This chain is Pepsin A (PGA), found in Sus scrofa (Pig).